Here is a 194-residue protein sequence, read N- to C-terminus: 7-methyl-GTP pyrophosphatase (194 aa).

D69 serves as the catalytic Proton acceptor.

It belongs to the Maf family. YceF subfamily. A divalent metal cation serves as cofactor.

It is found in the cytoplasm. It catalyses the reaction N(7)-methyl-GTP + H2O = N(7)-methyl-GMP + diphosphate + H(+). Its function is as follows. Nucleoside triphosphate pyrophosphatase that hydrolyzes 7-methyl-GTP (m(7)GTP). May have a dual role in cell division arrest and in preventing the incorporation of modified nucleotides into cellular nucleic acids. The sequence is that of 7-methyl-GTP pyrophosphatase (yceF1) from Salmonella paratyphi A (strain ATCC 9150 / SARB42).